The chain runs to 1711 residues: Reverse gyrase (1711 aa).

An RG N-terminal-type zinc finger spans residues 1–39; sequence MKAVYREMCPNCWGRISDERLVMRNPCEECLDEPVHADS. The Zn(2+) site is built by cysteine 9, cysteine 12, cysteine 27, and cysteine 30. Residues glutamine 89 and 106 to 113 each bind ATP; that span reads APTGMGKS. Residues 93–256 form the Helicase ATP-binding domain; the sequence is VKRLLKGRSF…RLKKQMSRYL (164 aa). A DEAD box motif is present at residues 213–216; that stretch reads DDVD. The topoisomerase I stretch occupies residues 638 to 1711; that stretch reads DLVRSALMIV…YSEIQRYVSG (1074 aa). In terms of domain architecture, Toprim spans 642–805; that stretch reads SALMIVESPN…NIKRIEFHEV (164 aa). Residue glutamate 648 participates in Mg(2+) binding. Residues 722–751 form an RG C-terminal-type zinc finger; that stretch reads LKRCRDCGHQFVDWEKKGVCPRCGSTNVRD. Positions 725, 728, 741, and 744 each coordinate Zn(2+). Residue aspartate 774 coordinates Mg(2+). Positions 821–1709 constitute a Topo IA-type catalytic domain; it reads NENRVNAQIV…ELYSEIQRYV (889 aa). Residues 1160–1287 form the DOD-type homing endonuclease domain; sequence VFGLVLGDGT…LSVYLYQIGI (128 aa). Tyrosine 1452 acts as the O-(5'-phospho-DNA)-tyrosine intermediate in catalysis.

This sequence in the N-terminal section; belongs to the DEAD box helicase family. DDVD subfamily. In the C-terminal section; belongs to the type IA topoisomerase family. In terms of assembly, monomer. Requires Zn(2+) as cofactor. The cofactor is Mg(2+). This protein undergoes a protein self splicing that involves a post-translational excision of the intervening region (intein) followed by peptide ligation.

The protein localises to the cytoplasm. The catalysed reaction is ATP + H2O = ADP + phosphate + H(+). In terms of biological role, modifies the topological state of DNA by introducing positive supercoils in an ATP-dependent process, increasing the linking number in steps of +1. Binds to single-stranded DNA, transiently cleaves and then rejoins the ends, introducing a positive supercoil in the process. The scissile phosphodiester is attacked by the catalytic tyrosine of the enzyme, resulting in the formation of a DNA-(5'-phosphotyrosyl)-enzyme intermediate. Probably involved in rewinding DNA strands in regions of the chromosome that have opened up to allow replication, transcription, DNA repair and/or for DNA protection. The sequence is that of Reverse gyrase from Thermococcus kodakarensis (strain ATCC BAA-918 / JCM 12380 / KOD1) (Pyrococcus kodakaraensis (strain KOD1)).